A 449-amino-acid polypeptide reads, in one-letter code: Nucleoporin NUP42 (449 aa).

The segment at 1–25 adopts a C3H1-type zinc-finger fold; that stretch reads MAICSFFLQGRCRYGEKCWNEHPRG. Disordered stretches follow at residues 22-84 and 218-237; these read HPRG…GFDN and DMTSGYNGQQKPAFGSSSFP. 2 stretches are compositionally biased toward polar residues: residues 47 to 83 and 218 to 227; these read WGSSSQRYVQPSSFSRSTTWVNRDNEKPSSGSHSGFD and DMTSGYNGQQ. 7 FG repeats span residues 231–232, 274–275, 284–285, 305–306, 314–315, 335–336, and 347–348; these read FG.

Probable component of the nuclear pore complex (NPC).

The protein resides in the nucleus. It is found in the nuclear pore complex. Its subcellular location is the nucleus membrane. Functionally, required for the export of mRNAs containing poly(A) tails from the nucleus into the cytoplasm. This Xenopus tropicalis (Western clawed frog) protein is Nucleoporin NUP42 (nup42).